Reading from the N-terminus, the 227-residue chain is uncharacterized protein (227 aa).

Positions 1 to 21 (MELKKIAVGLTALLGMSVANA) are cleaved as a signal peptide.

This is an uncharacterized protein from Haemophilus influenzae (strain ATCC 51907 / DSM 11121 / KW20 / Rd).